A 130-amino-acid polypeptide reads, in one-letter code: Cytochrome b-c1 complex subunit 7 (130 aa).

This sequence belongs to the UQCRB/QCR7 family. Component of the ubiquinol-cytochrome c oxidoreductase (cytochrome b-c1 complex, complex III, CIII), a multisubunit enzyme composed of 3 respiratory subunits cytochrome b, cytochrome c1 and Rieske protein, 2 core protein subunits, and additional low-molecular weight protein subunits. The complex exists as an obligatory dimer and forms supercomplexes (SCs) in the inner mitochondrial membrane with cytochrome c oxidase (complex IV, CIV).

The protein resides in the mitochondrion inner membrane. Functionally, component of the ubiquinol-cytochrome c oxidoreductase, a multisubunit transmembrane complex that is part of the mitochondrial electron transport chain which drives oxidative phosphorylation. The respiratory chain contains 3 multisubunit complexes succinate dehydrogenase (complex II, CII), ubiquinol-cytochrome c oxidoreductase (cytochrome b-c1 complex, complex III, CIII) and cytochrome c oxidase (complex IV, CIV), that cooperate to transfer electrons derived from NADH and succinate to molecular oxygen, creating an electrochemical gradient over the inner membrane that drives transmembrane transport and the ATP synthase. The cytochrome b-c1 complex catalyzes electron transfer from ubiquinol to cytochrome c, linking this redox reaction to translocation of protons across the mitochondrial inner membrane, with protons being carried across the membrane as hydrogens on the quinol. In the process called Q cycle, 2 protons are consumed from the matrix, 4 protons are released into the intermembrane space and 2 electrons are passed to cytochrome c. The sequence is that of Cytochrome b-c1 complex subunit 7 from Schistosoma mansoni (Blood fluke).